The following is a 94-amino-acid chain: Large ribosomal subunit protein uL29 (94 aa).

Residues 65–94 form a disordered region; sequence ANPGERKSRVFSRAKRKKKNLARLSAKAKG. Over residues 73–94 the composition is skewed to basic residues; sequence RVFSRAKRKKKNLARLSAKAKG.

It belongs to the universal ribosomal protein uL29 family.

This Leptospira interrogans serogroup Icterohaemorrhagiae serovar copenhageni (strain Fiocruz L1-130) protein is Large ribosomal subunit protein uL29.